The chain runs to 85 residues: MERNSRRILVGKVVSDKMDKTITVLVETYKNHPIYKKRVKYSKKYKAHDEQQVAKIGDKVQIMETRPLSKTKNFRLVKVVEKAIL.

The protein belongs to the universal ribosomal protein uS17 family. In terms of assembly, part of the 30S ribosomal subunit.

One of the primary rRNA binding proteins, it binds specifically to the 5'-end of 16S ribosomal RNA. This is Small ribosomal subunit protein uS17 from Mesoplasma florum (strain ATCC 33453 / NBRC 100688 / NCTC 11704 / L1) (Acholeplasma florum).